The sequence spans 554 residues: Eukaryotic translation initiation factor 3 subunit D-2 (554 aa).

A disordered region spans residues 116 to 149; it reads RGNAAIGGGQGGAGGTGGAGVGNKYGKGRDMRRG. The span at 120–140 shows a compositional bias: gly residues; the sequence is AIGGGQGGAGGTGGAGVGNKY. The interval 291–305 is RNA gate; that stretch reads QFDLLTVNETALEPP. The tract at residues 532 to 554 is disordered; sequence FDSDGNDDEETSDDRPFLKSLGN.

Belongs to the eIF-3 subunit D family. Component of the eukaryotic translation initiation factor 3 (eIF-3) complex. The eIF-3 complex interacts with pix.

Its subcellular location is the cytoplasm. In terms of biological role, mRNA cap-binding component of the eukaryotic translation initiation factor 3 (eIF-3) complex, which is involved in protein synthesis of a specialized repertoire of mRNAs and, together with other initiation factors, stimulates binding of mRNA and methionyl-tRNAi to the 40S ribosome. The eIF-3 complex specifically targets and initiates translation of a subset of mRNAs involved in cell proliferation. In the eIF-3 complex, eif3d specifically recognizes and binds the 7-methylguanosine cap of a subset of mRNAs. This chain is Eukaryotic translation initiation factor 3 subunit D-2, found in Drosophila virilis (Fruit fly).